We begin with the raw amino-acid sequence, 843 residues long: Proto-oncogene vav (843 aa).

The Calponin-homology (CH) domain maps to 1–119 (MELWRQCTHW…YTLSALSWTP (119 aa)). Residues 194–373 (KRCCCLREIQ…RDLAQCVNEV (180 aa)) form the DH domain. In terms of domain architecture, PH spans 402-504 (RPKIDGELKI…WMEQFEMAIS (103 aa)). The Phorbol-ester/DAG-type zinc-finger motif lies at 515–564 (GHDFQMFSFEETTSCKACQMLLRGTFYQGYRCYRCRAPAHKECLGRVPPC). The SH3 1 domain occupies 590–658 (LGLPKMEVCQ…PCNRVRPYVH (69 aa)). Residues 669-763 (WYAGPMERAG…SLDTTLQFPY (95 aa)) enclose the SH2 domain. In terms of domain architecture, SH3 2 spans 780 to 840 (KYFGTAKARY…PSNYVEEDYS (61 aa)). Phosphotyrosine is present on residues tyrosine 824 and tyrosine 842.

In terms of assembly, interacts with SHB. Interacts with APS, DOCK2, GRB2, GRB3, DOCK2, SLA, TEC and ZNF655/VIK. Interacts with SIAH2; without leading to its degradation. Associates with BLNK, PLCG1, GRB2 and NCK1 in a B-cell antigen receptor-dependent fashion. Interacts with CBLB; which inhibits tyrosine phosphorylation and down-regulates activity. May interact with CCPG1. Interacts with CLNK. Interacts with THEMIS2. Interacts with NEK3 and this interaction is prolactin-dependent. Interacts with ITK. Interacts with PTK2B/PYK2. Interacts with HCK. Interacts with PTK2B/PYK2. Interacts (via SH2 domain) with SYK. Interacts with ANKRD54. Interacts with CD6. Interacts with LCP2; this interaction plays a role in TCR-mediated cytokine production. Phosphorylated by FYN. Phosphorylated on tyrosine residues by HCK in response to IFNG and bacterial lipopolysaccharide (LPS).

Its function is as follows. Couples tyrosine kinase signals with the activation of the Rho/Rac GTPases, thus leading to cell differentiation and/or proliferation. The sequence is that of Proto-oncogene vav (Vav1) from Rattus norvegicus (Rat).